We begin with the raw amino-acid sequence, 111 residues long: Ig kappa chain V-III region PC 6684 (111 aa).

Residues 1–23 are framework-1; it reads DIVLTQSPASLAVSLGQRATISC. A disulfide bridge links Cys-23 with Cys-92. The complementarity-determining-1 stretch occupies residues 24–38; that stretch reads RASKSVSTSGYSYMH. The framework-2 stretch occupies residues 39 to 53; that stretch reads WYQQKPGQPPKLLIY. The segment at 54 to 60 is complementarity-determining-2; the sequence is LASNLES. The tract at residues 61–92 is framework-3; the sequence is GVPARFSGSGSGTDFTLNIHPVEEEDAATYYC. The complementarity-determining-3 stretch occupies residues 93–101; the sequence is QHSRELPRT. The interval 102–111 is framework-4; sequence FGGGTKLEIK.

In Mus musculus (Mouse), this protein is Ig kappa chain V-III region PC 6684.